The chain runs to 443 residues: Phosphoglucosamine mutase (443 aa).

Catalysis depends on serine 103, which acts as the Phosphoserine intermediate. Residues serine 103, aspartate 244, aspartate 246, and aspartate 248 each contribute to the Mg(2+) site. The residue at position 103 (serine 103) is a Phosphoserine.

The protein belongs to the phosphohexose mutase family. Mg(2+) is required as a cofactor. In terms of processing, activated by phosphorylation.

The enzyme catalyses alpha-D-glucosamine 1-phosphate = D-glucosamine 6-phosphate. Its function is as follows. Catalyzes the conversion of glucosamine-6-phosphate to glucosamine-1-phosphate. The chain is Phosphoglucosamine mutase from Pelagibacter ubique (strain HTCC1062).